The primary structure comprises 352 residues: Protein RecA (352 aa).

Residue 67-74 (GPESSGKT) participates in ATP binding. The interval 330–352 (STPKPEAESQEKAAAAQDDDSLV) is disordered.

The protein belongs to the RecA family.

The protein resides in the cytoplasm. Its function is as follows. Can catalyze the hydrolysis of ATP in the presence of single-stranded DNA, the ATP-dependent uptake of single-stranded DNA by duplex DNA, and the ATP-dependent hybridization of homologous single-stranded DNAs. It interacts with LexA causing its activation and leading to its autocatalytic cleavage. The protein is Protein RecA of Chromohalobacter salexigens (strain ATCC BAA-138 / DSM 3043 / CIP 106854 / NCIMB 13768 / 1H11).